The sequence spans 896 residues: Alanine--tRNA ligase (896 aa).

Residues histidine 574, histidine 578, cysteine 677, and histidine 681 each contribute to the Zn(2+) site.

It belongs to the class-II aminoacyl-tRNA synthetase family. It depends on Zn(2+) as a cofactor.

It is found in the cytoplasm. It catalyses the reaction tRNA(Ala) + L-alanine + ATP = L-alanyl-tRNA(Ala) + AMP + diphosphate. In terms of biological role, catalyzes the attachment of alanine to tRNA(Ala) in a two-step reaction: alanine is first activated by ATP to form Ala-AMP and then transferred to the acceptor end of tRNA(Ala). Also edits incorrectly charged Ser-tRNA(Ala) and Gly-tRNA(Ala) via its editing domain. The protein is Alanine--tRNA ligase of Mycoplasma mycoides subsp. mycoides SC (strain CCUG 32753 / NCTC 10114 / PG1).